Consider the following 322-residue polypeptide: Beta-ketoacyl-[acyl-carrier-protein] synthase III (322 aa).

Catalysis depends on residues C113 and H247. The tract at residues 248–252 (QANIR) is ACP-binding. The active site involves N278.

It belongs to the thiolase-like superfamily. FabH family. As to quaternary structure, homodimer.

It localises to the cytoplasm. It catalyses the reaction malonyl-[ACP] + acetyl-CoA + H(+) = 3-oxobutanoyl-[ACP] + CO2 + CoA. It functions in the pathway lipid metabolism; fatty acid biosynthesis. Catalyzes the condensation reaction of fatty acid synthesis by the addition to an acyl acceptor of two carbons from malonyl-ACP. Catalyzes the first condensation reaction which initiates fatty acid synthesis and may therefore play a role in governing the total rate of fatty acid production. Possesses both acetoacetyl-ACP synthase and acetyl transacylase activities. Its substrate specificity determines the biosynthesis of branched-chain and/or straight-chain of fatty acids. The protein is Beta-ketoacyl-[acyl-carrier-protein] synthase III of Tropheryma whipplei (strain TW08/27) (Whipple's bacillus).